We begin with the raw amino-acid sequence, 243 residues long: tRNA (guanine-N(1)-)-methyltransferase (243 aa).

S-adenosyl-L-methionine contacts are provided by residues glycine 108 and 127 to 132 (LGDFVL).

Belongs to the RNA methyltransferase TrmD family. In terms of assembly, homodimer.

It localises to the cytoplasm. The catalysed reaction is guanosine(37) in tRNA + S-adenosyl-L-methionine = N(1)-methylguanosine(37) in tRNA + S-adenosyl-L-homocysteine + H(+). Specifically methylates guanosine-37 in various tRNAs. In Streptococcus equi subsp. equi (strain 4047), this protein is tRNA (guanine-N(1)-)-methyltransferase.